Consider the following 352-residue polypeptide: Phenylalanine--tRNA ligase alpha subunit (352 aa).

Mg(2+) is bound at residue E258.

It belongs to the class-II aminoacyl-tRNA synthetase family. Phe-tRNA synthetase alpha subunit type 1 subfamily. Tetramer of two alpha and two beta subunits. Mg(2+) is required as a cofactor.

It is found in the cytoplasm. It carries out the reaction tRNA(Phe) + L-phenylalanine + ATP = L-phenylalanyl-tRNA(Phe) + AMP + diphosphate + H(+). This is Phenylalanine--tRNA ligase alpha subunit from Staphylococcus epidermidis (strain ATCC 35984 / DSM 28319 / BCRC 17069 / CCUG 31568 / BM 3577 / RP62A).